The primary structure comprises 351 residues: MNPPKSAPDAQGLSYRDAGVDIDAGDALIDKIKPFAKKTLRDGVLGGIGGFGALFEVPKKYKEPVLVSGTDGVGTKLKLAFHLNKHDTVGQDLVAMSVNDILVQGAEPLFFLDYFACGKLDVDTAATVVKGIAHGCELSGCALIGGETAEMPGMYPDGEYDLAGFAVGAVEKSKIIDGSTIAEGDVVLGLASSGIHSNGFSLVRKIIERANPDLSADFHGRSLADTLMAPTRIYVKPLLALMQKLPVKGMAHITGGGLVENIPRVLREGLTAELDQNAWPLPPLFKWLQEHGGVADAEMHRVFNCGIGMAVIVSAADADAAIADLTAAGEQVWKIGTVRASREGEAQTVVA.

The protein belongs to the AIR synthase family.

It localises to the cytoplasm. It catalyses the reaction 2-formamido-N(1)-(5-O-phospho-beta-D-ribosyl)acetamidine + ATP = 5-amino-1-(5-phospho-beta-D-ribosyl)imidazole + ADP + phosphate + H(+). Its pathway is purine metabolism; IMP biosynthesis via de novo pathway; 5-amino-1-(5-phospho-D-ribosyl)imidazole from N(2)-formyl-N(1)-(5-phospho-D-ribosyl)glycinamide: step 2/2. The sequence is that of Phosphoribosylformylglycinamidine cyclo-ligase from Burkholderia ambifaria (strain MC40-6).